A 376-amino-acid chain; its full sequence is Phosphoserine aminotransferase (376 aa).

R54 contacts L-glutamate. Residues A88–T89, W115, T165, D186, and Q209 each bind pyridoxal 5'-phosphate. Residue K210 is modified to N6-(pyridoxal phosphate)lysine. Residue N251–T252 coordinates pyridoxal 5'-phosphate.

Belongs to the class-V pyridoxal-phosphate-dependent aminotransferase family. SerC subfamily. As to quaternary structure, homodimer. The cofactor is pyridoxal 5'-phosphate.

Its subcellular location is the cytoplasm. The catalysed reaction is O-phospho-L-serine + 2-oxoglutarate = 3-phosphooxypyruvate + L-glutamate. It carries out the reaction 4-(phosphooxy)-L-threonine + 2-oxoglutarate = (R)-3-hydroxy-2-oxo-4-phosphooxybutanoate + L-glutamate. It participates in amino-acid biosynthesis; L-serine biosynthesis; L-serine from 3-phospho-D-glycerate: step 2/3. It functions in the pathway cofactor biosynthesis; pyridoxine 5'-phosphate biosynthesis; pyridoxine 5'-phosphate from D-erythrose 4-phosphate: step 3/5. Its function is as follows. Catalyzes the reversible conversion of 3-phosphohydroxypyruvate to phosphoserine and of 3-hydroxy-2-oxo-4-phosphonooxybutanoate to phosphohydroxythreonine. The chain is Phosphoserine aminotransferase from Rhodopirellula baltica (strain DSM 10527 / NCIMB 13988 / SH1).